The primary structure comprises 624 residues: tRNA uridine 5-carboxymethylaminomethyl modification enzyme MnmG (624 aa).

FAD-binding positions include 13–18, V125, and S180; that span reads GGGHAG. 273-287 is a binding site for NAD(+); it reads GPRYCPSIEDKIVRF. Q370 contributes to the FAD binding site.

This sequence belongs to the MnmG family. As to quaternary structure, homodimer. Heterotetramer of two MnmE and two MnmG subunits. FAD serves as cofactor.

It is found in the cytoplasm. Its function is as follows. NAD-binding protein involved in the addition of a carboxymethylaminomethyl (cmnm) group at the wobble position (U34) of certain tRNAs, forming tRNA-cmnm(5)s(2)U34. This chain is tRNA uridine 5-carboxymethylaminomethyl modification enzyme MnmG, found in Legionella pneumophila (strain Lens).